The chain runs to 139 residues: Protein VP5 (139 aa).

The interval 94–139 (RDALPPTDLGTTMPTTNRSRSARPTPRPMGSTSTQQHPQRSRSTCR) is disordered. Positions 102–112 (LGTTMPTTNRS) are enriched in polar residues.

This chain is Protein VP5 (VP5), found in Channa lucius (Forest snakehead).